We begin with the raw amino-acid sequence, 1377 residues long: DNA-directed RNA polymerase subunit beta (1377 aa).

This sequence belongs to the RNA polymerase beta chain family. As to quaternary structure, the RNAP catalytic core consists of 2 alpha, 1 beta, 1 beta' and 1 omega subunit. When a sigma factor is associated with the core the holoenzyme is formed, which can initiate transcription.

The enzyme catalyses RNA(n) + a ribonucleoside 5'-triphosphate = RNA(n+1) + diphosphate. DNA-dependent RNA polymerase catalyzes the transcription of DNA into RNA using the four ribonucleoside triphosphates as substrates. This Azoarcus sp. (strain BH72) protein is DNA-directed RNA polymerase subunit beta.